Consider the following 77-residue polypeptide: MENFDKVKDIIVDRLGVDADKVTEDASFKDDLGADSLDIAELVMELEDEFGTEIPDEEAEKINTVGDAVKYINSLEK.

Residues 1 to 76 form the Carrier domain; that stretch reads MENFDKVKDI…DAVKYINSLE (76 aa). Ser36 is subject to O-(pantetheine 4'-phosphoryl)serine.

The protein belongs to the acyl carrier protein (ACP) family. In terms of processing, 4'-phosphopantetheine is transferred from CoA to a specific serine of apo-ACP by AcpS. This modification is essential for activity because fatty acids are bound in thioester linkage to the sulfhydryl of the prosthetic group.

It localises to the cytoplasm. It functions in the pathway lipid metabolism; fatty acid biosynthesis. Carrier of the growing fatty acid chain in fatty acid biosynthesis. In Staphylococcus epidermidis (strain ATCC 12228 / FDA PCI 1200), this protein is Acyl carrier protein.